A 369-amino-acid polypeptide reads, in one-letter code: Methylthioribose-1-phosphate isomerase (369 aa).

Residues 54 to 56 (RGA), Arg-95, and Gln-208 contribute to the substrate site. Catalysis depends on Asp-249, which acts as the Proton donor. 259-260 (NK) contributes to the substrate binding site.

The protein belongs to the eIF-2B alpha/beta/delta subunits family. MtnA subfamily.

The enzyme catalyses 5-(methylsulfanyl)-alpha-D-ribose 1-phosphate = 5-(methylsulfanyl)-D-ribulose 1-phosphate. It functions in the pathway amino-acid biosynthesis; L-methionine biosynthesis via salvage pathway; L-methionine from S-methyl-5-thio-alpha-D-ribose 1-phosphate: step 1/6. Functionally, catalyzes the interconversion of methylthioribose-1-phosphate (MTR-1-P) into methylthioribulose-1-phosphate (MTRu-1-P). The sequence is that of Methylthioribose-1-phosphate isomerase from Desulfatibacillum aliphaticivorans.